Consider the following 225-residue polypeptide: MGHKVNPIGLRLGINRTWDSRWYAGGDYSRLLHDDLKLRGHLRKKLSGAGVSRVVIERPAKKPRVTIYAARPGVVIGKKGQDIEALRKGLTGMAGTDVALNIVEIRKPEIDATLVAENIAQQLERRVAFRRAMKRAVQSAMRLGAQGIRINCSGRLGGAEIARIEWYREGRVPLHTLRADIDYGVATAKTTYGTCGVKVWIFKGEILAQDPMAQDRRAAEQAPQR.

A KH type-2 domain is found at 38–106 (LRGHLRKKLS…DVALNIVEIR (69 aa)).

It belongs to the universal ribosomal protein uS3 family. As to quaternary structure, part of the 30S ribosomal subunit. Forms a tight complex with proteins S10 and S14.

Binds the lower part of the 30S subunit head. Binds mRNA in the 70S ribosome, positioning it for translation. In Granulibacter bethesdensis (strain ATCC BAA-1260 / CGDNIH1), this protein is Small ribosomal subunit protein uS3.